Consider the following 382-residue polypeptide: Queuine tRNA-ribosyltransferase (382 aa).

The Proton acceptor role is filled by D93. Substrate-binding positions include 93–97 (DSGGF), D147, Q191, and G218. The segment at 249 to 255 (GVGKPED) is RNA binding. D268 serves as the catalytic Nucleophile. The tract at residues 273 to 277 (TRNAR) is RNA binding; important for wobble base 34 recognition. 4 residues coordinate Zn(2+): C306, C308, C311, and H337.

It belongs to the queuine tRNA-ribosyltransferase family. Homodimer. Within each dimer, one monomer is responsible for RNA recognition and catalysis, while the other monomer binds to the replacement base PreQ1. It depends on Zn(2+) as a cofactor.

The catalysed reaction is 7-aminomethyl-7-carbaguanine + guanosine(34) in tRNA = 7-aminomethyl-7-carbaguanosine(34) in tRNA + guanine. It functions in the pathway tRNA modification; tRNA-queuosine biosynthesis. Functionally, catalyzes the base-exchange of a guanine (G) residue with the queuine precursor 7-aminomethyl-7-deazaguanine (PreQ1) at position 34 (anticodon wobble position) in tRNAs with GU(N) anticodons (tRNA-Asp, -Asn, -His and -Tyr). Catalysis occurs through a double-displacement mechanism. The nucleophile active site attacks the C1' of nucleotide 34 to detach the guanine base from the RNA, forming a covalent enzyme-RNA intermediate. The proton acceptor active site deprotonates the incoming PreQ1, allowing a nucleophilic attack on the C1' of the ribose to form the product. After dissociation, two additional enzymatic reactions on the tRNA convert PreQ1 to queuine (Q), resulting in the hypermodified nucleoside queuosine (7-(((4,5-cis-dihydroxy-2-cyclopenten-1-yl)amino)methyl)-7-deazaguanosine). The chain is Queuine tRNA-ribosyltransferase from Actinobacillus pleuropneumoniae serotype 3 (strain JL03).